A 427-amino-acid polypeptide reads, in one-letter code: UDP-N-acetylglucosamine 1-carboxyvinyltransferase 2 (427 aa).

19 to 20 (KN) contacts phosphoenolpyruvate. Residue R91 coordinates UDP-N-acetyl-alpha-D-glucosamine. Catalysis depends on C115, which acts as the Proton donor. 2-(S-cysteinyl)pyruvic acid O-phosphothioketal is present on C115. D307 and V329 together coordinate UDP-N-acetyl-alpha-D-glucosamine.

This sequence belongs to the EPSP synthase family. MurA subfamily.

The protein localises to the cytoplasm. The enzyme catalyses phosphoenolpyruvate + UDP-N-acetyl-alpha-D-glucosamine = UDP-N-acetyl-3-O-(1-carboxyvinyl)-alpha-D-glucosamine + phosphate. Its pathway is cell wall biogenesis; peptidoglycan biosynthesis. Cell wall formation. Adds enolpyruvyl to UDP-N-acetylglucosamine. This chain is UDP-N-acetylglucosamine 1-carboxyvinyltransferase 2, found in Prochlorococcus marinus (strain SARG / CCMP1375 / SS120).